The sequence spans 329 residues: Transmembrane protein I329L (329 aa).

The first 31 residues, 1–31, serve as a signal peptide directing secretion; sequence MLRVFIFFVFLGSGLAGKVKSPITCKYFISK. Residues N32, N39, N44, N58, N76, N82, N101, N185, and N219 are each glycosylated (N-linked (GlcNAc...) asparagine; by host). At 32 to 239 the chain is on the extracellular side; that stretch reads NNTWYKYNVT…NTERYKNCYP (208 aa). The helical transmembrane segment at 240-260 threads the bilayer; that stretch reads FVLVSIICSCISSLFLLICLL. Residues 261–329 are Cytoplasmic-facing; sequence RTICKKYSCT…EKKVSCSRRK (69 aa).

The protein belongs to the asfivirus I329L family. Highly glycosylated.

It is found in the host endoplasmic reticulum membrane. The protein resides in the host Golgi apparatus membrane. In terms of biological role, viral TLR3 homolog that probably prevents TLR3 dimerization and subsequent induction of IFN. Inhibits dsRNA-stimulated activation of NF-kB and IRF3. This chain is Transmembrane protein I329L, found in Ornithodoros (relapsing fever ticks).